A 541-amino-acid polypeptide reads, in one-letter code: Testis-specific chromodomain protein Y 2 (541 aa).

Positions 6-66 (FEVEAIVDKR…RQTEKQKKLT (61 aa)) constitute a Chromo domain. Positions 72–104 (RIFSNNARRRTSRSTKANYSKNSPKTPVTDKHH) are disordered. Residues 87–97 (KANYSKNSPKT) show a composition bias toward polar residues.

In terms of tissue distribution, testis specific.

The protein localises to the nucleus. The catalysed reaction is L-lysyl-[protein] + acetyl-CoA = N(6)-acetyl-L-lysyl-[protein] + CoA + H(+). Its function is as follows. May have histone acetyltransferase activity. The chain is Testis-specific chromodomain protein Y 2 (CDY2A) from Homo sapiens (Human).